The chain runs to 533 residues: CEP295 N-terminal-like protein (533 aa).

Disordered stretches follow at residues 1 to 40, 84 to 176, 286 to 333, and 370 to 399; these read MQRDTERAAQLSPSSEDEALVLRQKPLEMPAQEEDSTTLQ, RSMG…RVTR, LKAD…ETTE, and AGTSREQDDLLSLSPESGQEPPKSPLLEDE. Positions 40–72 form a coiled coil; the sequence is QQWKARQLQRLAEELKAEWQEARLQQVRQAERL. Positions 107-126 are enriched in basic and acidic residues; sequence KERNRAAFREERGRREEHPR. The stretch at 416-531 forms a coiled coil; that stretch reads MALRQKQKAE…ARKRLQEFQK (116 aa).

Expressed in mature spermatozoa (at protein level). Detected in retina, lung and kidney. In brain, highly expressed in brain-stem, cerebral cortex and thalamus with lesser expression in cerebellum and hippocampus.

Its subcellular location is the cell projection. The protein resides in the cilium. This Mus musculus (Mouse) protein is CEP295 N-terminal-like protein.